A 740-amino-acid polypeptide reads, in one-letter code: Rho GTPase-activating protein 92B (740 aa).

The region spanning 13–246 (ENLSRSSKSD…IQDTIQGTEK (234 aa)) is the BAR domain. Positions 49 to 74 (LPALSGGGGSGSGSSEEQDKRTKKNS) are disordered. Positions 251-448 (TSLKEHLTST…LLISQWDYFF (198 aa)) constitute a Rho-GAP domain. A disordered region spans residues 467-740 (GKSKSNSSNE…PPPTNWKSSD (274 aa)). A phosphoserine mark is found at S469 and S473. The segment covering 506–520 (TTNGNGIIMTTSQTS) has biased composition (polar residues). Pro residues predominate over residues 566-577 (PLPPPPVTPAKP). At S593 the chain carries Phosphoserine. Position 595 is a phosphothreonine (T595). Positions 643–655 (TTPTQATIDNGNG) are enriched in polar residues. A compositionally biased stretch (basic and acidic residues) spans 659–672 (FKTEHFLDKLRQEN). A compositionally biased stretch (polar residues) spans 673 to 686 (GETNGTREVSSTTK). The span at 694-713 (PPATAADQNQQQAQPQVTTP) shows a compositional bias: low complexity. S715 carries the phosphoserine modification. Residue T721 is modified to Phosphothreonine. Residues 725-734 (PTVPAPPPPT) show a composition bias toward pro residues. Phosphoserine occurs at positions 738 and 739.

Its function is as follows. GTPase activator for the Rho-type GTPases by converting them to an inactive GDP-bound state. This Drosophila melanogaster (Fruit fly) protein is Rho GTPase-activating protein 92B (RhoGAP92B).